The primary structure comprises 359 residues: Pyruvate dehydrogenase E1 component subunit beta, mitochondrial (359 aa).

A mitochondrion-targeting transit peptide spans 1–30 (MAVVAGLVRGPLRQASGLLKRRFHRSAPAA). Tyr67 bears the Phosphotyrosine mark. A thiamine diphosphate-binding site is contributed by Glu89. The K(+) site is built by Ile142, Ala190, Ile191, Asp193, and Asn195. An N6-acetyllysine modification is found at Lys354.

In terms of assembly, heterotetramer of two PDHA1 and two PDHB subunits. The heterotetramer interacts with DLAT, and is part of the multimeric pyruvate dehydrogenase complex that contains multiple copies of pyruvate dehydrogenase (E1), dihydrolipoamide acetyltransferase (DLAT, E2) and lipoamide dehydrogenase (DLD, E3). These subunits are bound to an inner core composed of about 48 DLAT and 12 PDHX molecules. Interacts with DLAT. Requires thiamine diphosphate as cofactor.

The protein resides in the mitochondrion matrix. The enzyme catalyses N(6)-[(R)-lipoyl]-L-lysyl-[protein] + pyruvate + H(+) = N(6)-[(R)-S(8)-acetyldihydrolipoyl]-L-lysyl-[protein] + CO2. Functionally, the pyruvate dehydrogenase complex catalyzes the overall conversion of pyruvate to acetyl-CoA and CO(2), and thereby links the glycolytic pathway to the tricarboxylic cycle. This Mus musculus (Mouse) protein is Pyruvate dehydrogenase E1 component subunit beta, mitochondrial (Pdhb).